The following is a 567-amino-acid chain: Adenine deaminase (567 aa).

This sequence belongs to the metallo-dependent hydrolases superfamily. Adenine deaminase family. Requires Mn(2+) as cofactor.

It carries out the reaction adenine + H2O + H(+) = hypoxanthine + NH4(+). The polypeptide is Adenine deaminase (Methanothrix thermoacetophila (strain DSM 6194 / JCM 14653 / NBRC 101360 / PT) (Methanosaeta thermophila)).